A 269-amino-acid polypeptide reads, in one-letter code: MSRRTYVRSERRRGCGDNLLQRIRLVVPSALQCCDGDLPIFDPQRPPARCVFQFNGEDNVSEAFPVEYIMRLMANWAQVDCDPYIKIQNTGVSVLFQGFFFRPTNAPVAEVSIDSNNVILSSTLSTGINLSALESIKRGGGIDRRPLQALMWVNCFVRMPYVQLSFRFMGPEDPSRTIKLMARATDAYMYKETGNNLDEYIRWRPSFRSPPENGSPNTSVQMQSDIKPALPDTQTTRVWKLALPVANVTYALFIVIVLVVVLGAVLFWK.

The Perinuclear space segment spans residues 1–247 (MSRRTYVRSE…VWKLALPVAN (247 aa)). Residues 248 to 268 (VTYALFIVIVLVVVLGAVLFW) form a helical membrane-spanning segment. Lys269 is a topological domain (nuclear).

Belongs to the herpesviridae NEC2 protein family. Forms a heterohexameric complex with NEC1. Phosphorylated.

The protein localises to the host nucleus inner membrane. In terms of biological role, plays an essential role in virion nuclear egress, the first step of virion release from infected cell. Within the host nucleus, NEC1 interacts with the newly formed capsid through the vertexes and directs it to the inner nuclear membrane by associating with NEC2. Induces the budding of the capsid at the inner nuclear membrane as well as its envelopment into the perinuclear space. There, the NEC1/NEC2 complex promotes the fusion of the enveloped capsid with the outer nuclear membrane and the subsequent release of the viral capsid into the cytoplasm where it will reach the secondary budding sites in the host Golgi or trans-Golgi network. This Homo sapiens (Human) protein is Nuclear egress protein 2.